Reading from the N-terminus, the 323-residue chain is ADP/ATP translocase 4 (323 aa).

Over M1–S23 the chain is Mitochondrial intermembrane. A Solcar 1 repeat occupies T22 to L114. Residues F24–Q53 traverse the membrane as a helical segment. Over V54–N90 the chain is Mitochondrial matrix. A helical transmembrane segment spans residues L91–F115. The ADP site is built by R96 and K108. At M116–F125 the chain is on the mitochondrial intermembrane side. The chain crosses the membrane as a helical span at residues W126 to V146. Solcar repeat units lie at residues R127–L217 and T224–L311. Over V147–G194 the chain is Mitochondrial matrix. A helical membrane pass occupies residues V195–K215. Over G216–F226 the chain is Mitochondrial intermembrane. The helical transmembrane segment at L227–F247 threads the bilayer. Residues D248–G287 lie on the Mitochondrial matrix side of the membrane. R251 provides a ligand contact to ADP. The segment at R251–M256 is important for transport activity. The Nucleotide carrier signature motif signature appears at R251–M256. A helical membrane pass occupies residues A288–Y305. At D306–D323 the chain is on the mitochondrial intermembrane side.

The protein belongs to the mitochondrial carrier (TC 2.A.29) family. As to quaternary structure, monomer.

Its subcellular location is the mitochondrion inner membrane. It is found in the membrane. It localises to the cell projection. The protein localises to the cilium. The protein resides in the flagellum membrane. It catalyses the reaction ADP(in) + ATP(out) = ADP(out) + ATP(in). The enzyme catalyses dATP(out) + ADP(in) = dATP(in) + ADP(out). It carries out the reaction dADP(in) + ADP(out) = dADP(out) + ADP(in). The catalysed reaction is H(+)(in) = H(+)(out). Its activity is regulated as follows. The matrix-open state (m-state) is inhibited by the membrane-permeable bongkrekic acid (BKA). The cytoplasmic-open state (c-state) is inhibited by the membrane-impermeable toxic inhibitor carboxyatractyloside (CATR). Proton transporter activity is inhibited by ADP:ATP antiporter activity. Its function is as follows. ADP:ATP antiporter that mediates import of ADP into the mitochondrial matrix for ATP synthesis, and export of ATP out to fuel the cell. Cycles between the cytoplasmic-open state (c-state) and the matrix-open state (m-state): operates by the alternating access mechanism with a single substrate-binding site intermittently exposed to either the cytosolic (c-state) or matrix (m-state) side of the inner mitochondrial membrane. Specifically required during spermatogenesis, probably to mediate ADP:ATP exchange in spermatocytes. Large ATP supplies from mitochondria may be critical for normal progression of spermatogenesis during early stages of meiotic prophase I, including DNA double-strand break repair and chromosomal synapsis. In addition to its ADP:ATP antiporter activity, also involved in mitochondrial uncoupling and mitochondrial permeability transition pore (mPTP) activity. Plays a role in mitochondrial uncoupling by acting as a proton transporter: proton transport uncouples the proton flows via the electron transport chain and ATP synthase to reduce the efficiency of ATP production and cause mitochondrial thermogenesis. Proton transporter activity is inhibited by ADP:ATP antiporter activity, suggesting that SLC25A31/ANT4 acts as a master regulator of mitochondrial energy output by maintaining a delicate balance between ATP production (ADP:ATP antiporter activity) and thermogenesis (proton transporter activity). Proton transporter activity requires free fatty acids as cofactor, but does not transport it. Among nucleotides, may also exchange ADP for dATP and dADP. Also plays a key role in mPTP opening, a non-specific pore that enables free passage of the mitochondrial membranes to solutes of up to 1.5 kDa, and which contributes to cell death. It is however unclear if SLC25A31/ANT4 constitutes a pore-forming component of mPTP or regulates it. This chain is ADP/ATP translocase 4, found in Bos taurus (Bovine).